The primary structure comprises 288 residues: Solute carrier family 25 member 45 (288 aa).

Solcar repeat units follow at residues 1–83 (MPVE…TLLV), 97–191 (PSYM…LCRQ), and 199–286 (PSSA…LLRW). Helical transmembrane passes span 6-26 (FVAG…FDTV), 63-83 (IASI…TLLV), 100-120 (MHIF…LAPF), 166-186 (GAWA…ITYE), 202-222 (ATVL…ATPL), and 266-286 (SARA…LLRW).

It belongs to the mitochondrial carrier (TC 2.A.29) family.

The protein resides in the mitochondrion inner membrane. In Homo sapiens (Human), this protein is Solute carrier family 25 member 45 (SLC25A45).